A 412-amino-acid polypeptide reads, in one-letter code: DNA replication and repair protein RecF (412 aa).

Gly30–Thr37 lines the ATP pocket. A disordered region spans residues Leu369–Asp412. The segment covering Gly389–Asp412 has biased composition (low complexity).

The protein belongs to the RecF family.

Its subcellular location is the cytoplasm. Its function is as follows. The RecF protein is involved in DNA metabolism; it is required for DNA replication and normal SOS inducibility. RecF binds preferentially to single-stranded, linear DNA. It also seems to bind ATP. This is DNA replication and repair protein RecF from Salinibacter ruber (strain DSM 13855 / M31).